Consider the following 93-residue polypeptide: Translation initiation factor IF-1 (93 aa).

The region spanning 1-72 (MAKEELIQFE…EKGRLIFRHK (72 aa)) is the S1-like domain. The disordered stretch occupies residues 70–93 (RHKDERPGGGPPRGAPPRGQFRRR).

It belongs to the IF-1 family. In terms of assembly, component of the 30S ribosomal translation pre-initiation complex which assembles on the 30S ribosome in the order IF-2 and IF-3, IF-1 and N-formylmethionyl-tRNA(fMet); mRNA recruitment can occur at any time during PIC assembly.

The protein resides in the cytoplasm. One of the essential components for the initiation of protein synthesis. Stabilizes the binding of IF-2 and IF-3 on the 30S subunit to which N-formylmethionyl-tRNA(fMet) subsequently binds. Helps modulate mRNA selection, yielding the 30S pre-initiation complex (PIC). Upon addition of the 50S ribosomal subunit IF-1, IF-2 and IF-3 are released leaving the mature 70S translation initiation complex. This Rhodopseudomonas palustris (strain BisB18) protein is Translation initiation factor IF-1.